Here is a 367-residue protein sequence, read N- to C-terminus: DNA replication and repair protein RecF (367 aa).

Position 30–37 (30–37 (GSNGSGKT)) interacts with ATP.

Belongs to the RecF family.

The protein localises to the cytoplasm. The RecF protein is involved in DNA metabolism; it is required for DNA replication and normal SOS inducibility. RecF binds preferentially to single-stranded, linear DNA. It also seems to bind ATP. The polypeptide is DNA replication and repair protein RecF (Pseudomonas putida (strain ATCC 700007 / DSM 6899 / JCM 31910 / BCRC 17059 / LMG 24140 / F1)).